Reading from the N-terminus, the 385-residue chain is Acyl-CoA dehydrogenase IpdE1 (385 aa).

FAD-binding positions include 126-129 (QGYS) and Ser-161. Catalysis depends on Glu-244, which acts as the Proton acceptor. 364 to 366 (SNE) lines the FAD pocket.

It belongs to the acyl-CoA dehydrogenase family. Heterotetramer composed of 2 IpdE1 subunits and 2 IpdE2 subunits. FAD is required as a cofactor.

The catalysed reaction is 3-[(3aS,4S,5R,7aS)-5-hydroxy-7a-methyl-1-oxo-octahydro-1H-inden-4-yl]propanoyl-CoA + A = (2E)-3-[(3aS,4S,5R,7aS)-5-hydroxy-7a-methyl-1-oxo-octahydro-1H-inden-4-yl]prop-2-enoyl-CoA + AH2. Its pathway is steroid metabolism; cholesterol degradation. In terms of biological role, involved in cholesterol degradation. Catalyzes the dehydrogenation of 5OH-HIP-CoA to 5OH-HIPE-CoA. Can also use octanoyl-CoA and dihydroferuloyl-CoA, with lower efficiency. Cannot use 3-oxo-4-pregnene-20-carboxyl-CoA (3-OPC-CoA). This chain is Acyl-CoA dehydrogenase IpdE1, found in Mycobacterium tuberculosis (strain ATCC 25618 / H37Rv).